The primary structure comprises 223 residues: Deoxyribose-phosphate aldolase (223 aa).

Asp-91 (proton donor/acceptor) is an active-site residue. Residue Lys-154 is the Schiff-base intermediate with acetaldehyde of the active site. Catalysis depends on Lys-183, which acts as the Proton donor/acceptor.

It belongs to the DeoC/FbaB aldolase family. DeoC type 1 subfamily.

It localises to the cytoplasm. The enzyme catalyses 2-deoxy-D-ribose 5-phosphate = D-glyceraldehyde 3-phosphate + acetaldehyde. It participates in carbohydrate degradation; 2-deoxy-D-ribose 1-phosphate degradation; D-glyceraldehyde 3-phosphate and acetaldehyde from 2-deoxy-alpha-D-ribose 1-phosphate: step 2/2. Catalyzes a reversible aldol reaction between acetaldehyde and D-glyceraldehyde 3-phosphate to generate 2-deoxy-D-ribose 5-phosphate. This is Deoxyribose-phosphate aldolase from Lysinibacillus sphaericus (strain C3-41).